A 288-amino-acid chain; its full sequence is Co-chaperone protein DjlA (288 aa).

Residues 1–6 (MNFIGK) lie on the Periplasmic side of the membrane. Residues 7 to 30 (ILGFIIGYRFGGLFGGIAGLILGH) form a helical membrane-spanning segment. The Cytoplasmic segment spans residues 31–288 (IADKKLYELG…DLICKVKGWK (258 aa)). The J domain occupies 222–288 (DAYKVLGVNA…DLICKVKGWK (67 aa)).

In terms of assembly, homodimer.

It is found in the cell inner membrane. Its function is as follows. Regulatory DnaK co-chaperone. Direct interaction between DnaK and DjlA is needed for the induction of the wcaABCDE operon, involved in the synthesis of a colanic acid polysaccharide capsule, possibly through activation of the RcsB/RcsC phosphotransfer signaling pathway. The colanic acid capsule may help the bacterium survive conditions outside the host. In Mannheimia succiniciproducens (strain KCTC 0769BP / MBEL55E), this protein is Co-chaperone protein DjlA.